The sequence spans 931 residues: Isoleucine--tRNA ligase (931 aa).

Over residues 1–14 the composition is skewed to polar residues; it reads MDYSKTLNLPQTQF. A disordered region spans residues 1 to 25; sequence MDYSKTLNLPQTQFPMRGNLPQREP. The short motif at 57–67 is the 'HIGH' region element; it reads PYANGHIHLGH. An L-isoleucyl-5'-AMP-binding site is contributed by glutamate 559. The 'KMSKS' region signature appears at 600–604; it reads KMSKS. Residue lysine 603 participates in ATP binding. Cysteine 898, cysteine 901, cysteine 918, and cysteine 921 together coordinate Zn(2+).

Belongs to the class-I aminoacyl-tRNA synthetase family. IleS type 1 subfamily. Monomer. It depends on Zn(2+) as a cofactor.

It localises to the cytoplasm. It catalyses the reaction tRNA(Ile) + L-isoleucine + ATP = L-isoleucyl-tRNA(Ile) + AMP + diphosphate. Catalyzes the attachment of isoleucine to tRNA(Ile). As IleRS can inadvertently accommodate and process structurally similar amino acids such as valine, to avoid such errors it has two additional distinct tRNA(Ile)-dependent editing activities. One activity is designated as 'pretransfer' editing and involves the hydrolysis of activated Val-AMP. The other activity is designated 'posttransfer' editing and involves deacylation of mischarged Val-tRNA(Ile). In Desulforamulus reducens (strain ATCC BAA-1160 / DSM 100696 / MI-1) (Desulfotomaculum reducens), this protein is Isoleucine--tRNA ligase.